Here is a 230-residue protein sequence, read N- to C-terminus: MASCAARGPAELSKAQAVRRIGILGGTFDPVHIGHLRSALEVAEFMGLDELRLLPNARPPHRDTPQVAAQDRLAMVREAVQGVACLSVDARELERDKPSYTIDTLESIRAELSGHDQLFLVLGWDAFCGLPAWHRWEELLQHCHILVLQRPDADVEPPDELRNLLAARSESDPTAMSGPAGNISFVWQTPLAVSATQIRQLLASGKSVRFLVPDAVLAYIEAHELYRAPN.

The protein belongs to the NadD family.

The catalysed reaction is nicotinate beta-D-ribonucleotide + ATP + H(+) = deamido-NAD(+) + diphosphate. It functions in the pathway cofactor biosynthesis; NAD(+) biosynthesis; deamido-NAD(+) from nicotinate D-ribonucleotide: step 1/1. In terms of biological role, catalyzes the reversible adenylation of nicotinate mononucleotide (NaMN) to nicotinic acid adenine dinucleotide (NaAD). The polypeptide is Probable nicotinate-nucleotide adenylyltransferase (Pseudomonas putida (strain ATCC 47054 / DSM 6125 / CFBP 8728 / NCIMB 11950 / KT2440)).